The primary structure comprises 179 residues: Large ribosomal subunit protein bL17 (179 aa).

Positions 123–161 (KEKDTKKKDDSKKSDDKKTSKKEAGFKSSKGESEHKKNT) are enriched in basic and acidic residues. Positions 123–179 (KEKDTKKKDDSKKSDDKKTSKKEAGFKSSKGESEHKKNTDQVVDSSSNRRYNRVKGS) are disordered. Positions 162 to 171 (DQVVDSSSNR) are enriched in polar residues.

Belongs to the bacterial ribosomal protein bL17 family. Part of the 50S ribosomal subunit. Contacts protein L32.

The protein is Large ribosomal subunit protein bL17 of Treponema denticola (strain ATCC 35405 / DSM 14222 / CIP 103919 / JCM 8153 / KCTC 15104).